The sequence spans 116 residues: EDHPVHNLGEHSVCDSVSAWVTKTTATDIKGNTVTVMENVNLDNKVYKEYFFETKCKNPNPEPSGCRGIDSSHWNSYCTETDTFIKALTMEGNQASWRFIRIETACVCVITKKKGN.

Intrachain disulfides connect C14–C78, C56–C106, and C66–C108. Residue K86 coordinates a 1,2-diacyl-sn-glycerol.

It belongs to the NGF-beta family. Homodimer; non-covalently linked. Interacts with NTRK1. Not glycosylated. As to expression, expressed by the venom gland.

It is found in the secreted. Functionally, nerve growth factor is important for the development and maintenance of the sympathetic and sensory nervous systems. It stimulates division and differentiation of sympathetic and embryonic sensory neurons as well as basal forebrain cholinergic neurons in the brain. Its relevance in the snake venom is not clear. However, it has been shown to inhibit metalloproteinase-dependent proteolysis of platelet glycoprotein Ib alpha, suggesting a metalloproteinase inhibition to prevent metalloprotease autodigestion and/or protection against prey proteases. Binds a lipid between the two protein chains in the homodimer. The lipid-bound form promotes histamine relase from mouse mast cells, contrary to the lipid-free form. The sequence is that of Venom nerve growth factor from Naja atra (Chinese cobra).